The sequence spans 291 residues: Protease HtpX homolog (291 aa).

A run of 2 helical transmembrane segments spans residues 4–24 (IVLF…TMRL) and 39–59 (TSLL…SLAI). A Zn(2+)-binding site is contributed by His145. The active site involves Glu146. His149 lines the Zn(2+) pocket. The next 2 helical transmembrane spans lie at 156–176 (VTLA…SRII) and 195–215 (FFVT…IIVM). Glu222 contributes to the Zn(2+) binding site.

This sequence belongs to the peptidase M48B family. Zn(2+) serves as cofactor.

It is found in the cell inner membrane. The polypeptide is Protease HtpX homolog (Thiobacillus denitrificans (strain ATCC 25259 / T1)).